Consider the following 309-residue polypeptide: Ras-like protein 1 (309 aa).

GTP-binding positions include 20–25 (GVGKSA), 36–42 (VDEYDPT), 66–67 (AG), 123–126 (NKLD), and 153–155 (SAK). The Effector region motif lies at 39-47 (YDPTIEDSY). Positions 177–303 (KYNSMNRQLD…SANARKESSG (127 aa)) are disordered. 2 stretches are compositionally biased toward polar residues: residues 179 to 188 (NSMNRQLDNT) and 209 to 235 (NGSYVLDNSLTNAGTGSSSKSAVNHNG). Residues 236-245 (ETTKRTDEKN) are compositionally biased toward basic and acidic residues. The segment covering 246 to 256 (YVNQNNNNEGN) has biased composition (low complexity). Residues 257–296 (TKYSSNGNGNRSDISRGNQNNALNSRSKQSAEPQKNSSAN) show a composition bias toward polar residues. Cysteine 305 is lipidated: S-palmitoyl cysteine. Cysteine 306 carries the post-translational modification Cysteine methyl ester. Residue cysteine 306 is the site of S-farnesyl cysteine attachment. Positions 307–309 (IIC) are cleaved as a propeptide — removed in mature form.

This sequence belongs to the small GTPase superfamily. Ras family. Farnesylated by RAM1-RAM2, which is required for targeting RAS1 to the cytoplasmic site of the endoplasmic reticulum, where proteolytic processing of the C-terminus by RCE1 and methylation of the resulting carboxyl group by STE14 occurs. In terms of processing, palmitoylated by the ERF2-SHR5 complex, which is required for proper plasma membrane localization of RAS1.

The protein localises to the cell membrane. It carries out the reaction GTP + H2O = GDP + phosphate + H(+). Its activity is regulated as follows. Alternates between an inactive form bound to GDP and an active form bound to GTP. Activated by guanine nucleotide-exchange factor (GEF) CDC25 and inactivated by GTPase-activating proteins (GAPs) IRA1 and IRA2. Functionally, the S.cerevisiae Ras proteins modulate the activity of the adenylate cyclase catalytic subunit and therefore affect the biosynthesis of cyclic-AMP. The protein is Ras-like protein 1 (RAS1) of Saccharomyces cerevisiae (strain ATCC 204508 / S288c) (Baker's yeast).